Consider the following 142-residue polypeptide: uncharacterized protein (142 aa).

The N-acetyltransferase domain occupies 1–120 (MADKFDANDE…TILKWEKNMD (120 aa)).

This sequence belongs to the acetyltransferase family.

This is an uncharacterized protein from Streptococcus pyogenes serotype M1.